A 356-amino-acid polypeptide reads, in one-letter code: Tyrosine recombinase XerS (356 aa).

Residues 16-121 form the Core-binding (CB) domain; it reads IMPWYVLDYY…ALSSLYKYLT (106 aa). One can recognise a Tyr recombinase domain in the interval 169 to 354; sequence AFLDYVDKEY…VNDEQKNALD (186 aa). Residues Arg-210, Lys-234, His-306, Arg-309, and His-332 contribute to the active site. Catalysis depends on Tyr-341, which acts as the O-(3'-phospho-DNA)-tyrosine intermediate.

Belongs to the 'phage' integrase family. XerS subfamily.

The protein localises to the cytoplasm. With respect to regulation, ftsK is required for recombination. Functionally, site-specific tyrosine recombinase, which acts by catalyzing the cutting and rejoining of the recombining DNA molecules. Essential to convert dimers of the bacterial chromosome into monomers to permit their segregation at cell division. The chain is Tyrosine recombinase XerS from Streptococcus equi subsp. zooepidemicus (strain MGCS10565).